We begin with the raw amino-acid sequence, 65 residues long: Large ribosomal subunit protein uL29 (65 aa).

This sequence belongs to the universal ribosomal protein uL29 family.

This chain is Large ribosomal subunit protein uL29, found in Methylococcus capsulatus (strain ATCC 33009 / NCIMB 11132 / Bath).